Consider the following 558-residue polypeptide: Formate--tetrahydrofolate ligase (558 aa).

67–74 contributes to the ATP binding site; the sequence is TPAGEGKT.

This sequence belongs to the formate--tetrahydrofolate ligase family.

The enzyme catalyses (6S)-5,6,7,8-tetrahydrofolate + formate + ATP = (6R)-10-formyltetrahydrofolate + ADP + phosphate. The protein operates within one-carbon metabolism; tetrahydrofolate interconversion. The polypeptide is Formate--tetrahydrofolate ligase (Ruegeria pomeroyi (strain ATCC 700808 / DSM 15171 / DSS-3) (Silicibacter pomeroyi)).